We begin with the raw amino-acid sequence, 194 residues long: Mersacidin decarboxylase (194 aa).

His-75 is an active-site residue.

This sequence belongs to the HFCD (homooligomeric flavin containing Cys decarboxylase) superfamily. Homododecamer. FAD is required as a cofactor.

Its pathway is antibiotic biosynthesis; mersacidin biosynthesis. Its function is as follows. Catalyzes the oxidative decarboxylation of the C-terminal cysteine residue of mersacidin to an aminoenethiol residue. The polypeptide is Mersacidin decarboxylase (mrsD) (Bacillus sp. (strain HIL-Y85/54728)).